Reading from the N-terminus, the 588-residue chain is Ribonuclease Y (588 aa).

Residues 7–27 (VLLVAVLLLALIVLGAVLVGV) traverse the membrane as a helical segment. Residues 130–162 (ARRSGEREAAVLATTTREQAAEVERRAARMDDR) form a disordered region. Positions 148 to 162 (QAAEVERRAARMDDR) are enriched in basic and acidic residues. Residues 278-359 (VVSVLHLPGD…HRIEEVHDLA (82 aa)) form the KH domain. The region spanning 404-497 (VLKHLVETAH…TQASDACSGG (94 aa)) is the HD domain.

It belongs to the RNase Y family.

It localises to the cell membrane. Its function is as follows. Endoribonuclease that initiates mRNA decay. The polypeptide is Ribonuclease Y (Salinispora arenicola (strain CNS-205)).